The following is a 188-amino-acid chain: Peptidyl-tRNA hydrolase (188 aa).

Tyr14 serves as a coordination point for tRNA. His19 functions as the Proton acceptor in the catalytic mechanism. Positions 64, 66, and 112 each coordinate tRNA.

This sequence belongs to the PTH family. Monomer.

Its subcellular location is the cytoplasm. The enzyme catalyses an N-acyl-L-alpha-aminoacyl-tRNA + H2O = an N-acyl-L-amino acid + a tRNA + H(+). Functionally, hydrolyzes ribosome-free peptidyl-tRNAs (with 1 or more amino acids incorporated), which drop off the ribosome during protein synthesis, or as a result of ribosome stalling. Its function is as follows. Catalyzes the release of premature peptidyl moieties from peptidyl-tRNA molecules trapped in stalled 50S ribosomal subunits, and thus maintains levels of free tRNAs and 50S ribosomes. This Bacillus pumilus (strain SAFR-032) protein is Peptidyl-tRNA hydrolase.